Consider the following 198-residue polypeptide: LexA repressor (198 aa).

The H-T-H motif DNA-binding region spans 28 to 47; the sequence is IRDIAKHFKLTPRGAHIHVL. Residues Ser-120 and Lys-157 each act as for autocatalytic cleavage activity in the active site.

The protein belongs to the peptidase S24 family. As to quaternary structure, homodimer.

It carries out the reaction Hydrolysis of Ala-|-Gly bond in repressor LexA.. Its function is as follows. Represses a number of genes involved in the response to DNA damage (SOS response), including recA and lexA. In the presence of single-stranded DNA, RecA interacts with LexA causing an autocatalytic cleavage which disrupts the DNA-binding part of LexA, leading to derepression of the SOS regulon and eventually DNA repair. The chain is LexA repressor from Thermosipho africanus (strain TCF52B).